The following is a 145-amino-acid chain: Large ribosomal subunit protein uL16 (145 aa).

Residues 1 to 17 (MLMPKRVKHRKVQRGRM) are compositionally biased toward basic residues. Residues 1-20 (MLMPKRVKHRKVQRGRMKGV) are disordered.

The protein belongs to the universal ribosomal protein uL16 family. Part of the 50S ribosomal subunit.

Binds 23S rRNA and is also seen to make contacts with the A and possibly P site tRNAs. The polypeptide is Large ribosomal subunit protein uL16 (Acetivibrio thermocellus (strain ATCC 27405 / DSM 1237 / JCM 9322 / NBRC 103400 / NCIMB 10682 / NRRL B-4536 / VPI 7372) (Clostridium thermocellum)).